The following is a 95-amino-acid chain: Large ribosomal subunit protein bL28 (95 aa).

The protein belongs to the bacterial ribosomal protein bL28 family.

The chain is Large ribosomal subunit protein bL28 from Zymomonas mobilis subsp. mobilis (strain ATCC 31821 / ZM4 / CP4).